The following is a 355-amino-acid chain: Lamassu protein LmuA (355 aa).

Component of antiviral defense system Lamassu type II, composed of LmuA and LmuB. Expression of Lamassu type II in B.subtilis (strain BEST7003) confers resistance to phage SpBeta. May be a nuclease. The protein is Lamassu protein LmuA of Bacillus cereus (strain VD014).